The sequence spans 92 residues: Small ribosomal subunit protein uS17 (92 aa).

The protein belongs to the universal ribosomal protein uS17 family. In terms of assembly, part of the 30S ribosomal subunit.

In terms of biological role, one of the primary rRNA binding proteins, it binds specifically to the 5'-end of 16S ribosomal RNA. The chain is Small ribosomal subunit protein uS17 from Corynebacterium diphtheriae (strain ATCC 700971 / NCTC 13129 / Biotype gravis).